Reading from the N-terminus, the 408-residue chain is Putative UPF0496 protein 2 (408 aa).

2 helical membrane passes run 224 to 244 (RIARGTAAAALVGACAAAIVA) and 252 to 272 (ALVGIGVAAAAFGATPAGAAR). A disordered region spans residues 385–408 (MARGLPPPSPATVTTTSEERLTSS).

The protein belongs to the UPF0496 family.

The protein resides in the membrane. The protein is Putative UPF0496 protein 2 of Oryza sativa subsp. japonica (Rice).